The following is a 1171-amino-acid chain: Zinc finger BED domain-containing protein 4 (1171 aa).

Residues 25–62 (EEEDDDGIPPDSLERMDFKSEQEDMKQTDSGGERAGLG) are disordered. Residues 36-51 (SLERMDFKSEQEDMKQ) are compositionally biased toward basic and acidic residues. Lysine 43 participates in a covalent cross-link: Glycyl lysine isopeptide (Lys-Gly) (interchain with G-Cter in SUMO2). 2 BED-type zinc fingers span residues 115–172 (RKKS…LIQE) and 285–342 (RRRS…VLQE). Cysteine 136, cysteine 139, histidine 160, histidine 165, cysteine 306, cysteine 309, histidine 330, and histidine 335 together coordinate Zn(2+). The span at 362-385 (LLPPEGELSSVSSSPVKPVRESPS) shows a compositional bias: low complexity. The tract at residues 362–405 (LLPPEGELSSVSSSPVKPVRESPSASSSPDRLTEDLQSHLNPGD) is disordered. BED-type zinc fingers lie at residues 456-512 (RLKS…VGSQ) and 558-615 (KKTS…LKTE). Residues cysteine 477 and cysteine 480 each contribute to the Zn(2+) site. Residue lysine 489 forms a Glycyl lysine isopeptide (Lys-Gly) (interchain with G-Cter in SUMO2) linkage. Histidine 500, histidine 505, cysteine 579, cysteine 582, histidine 603, and histidine 608 together coordinate Zn(2+). The segment at 614-640 (TEVSETARPSSPDTRVPRGTELSGASS) is disordered. At serine 624 the chain carries Phosphoserine. Residues 1086-1171 (LAYLEEEVLE…VNLPLIYFQY (86 aa)) form a required for homodimerization and nuclear accumulation region.

Homodimer; via C-terminus. Interacts with MYH9. Interacts with SAFB/SAFB1. In terms of tissue distribution, expressed in testis, heart, lung, and weakly expressed in brain, liver, muscle, placenta and small intestine. Expressed in the retina, found in the cone photoreceptors, Mueller cells, cone pedicles and in the innermost retinal layer.

It localises to the nucleus. The protein resides in the cytoplasm. It is found in the photoreceptor inner segment. In terms of biological role, transcriptional regulator that binds to poly-guanine tracts in gene promoters and activates transcription. Able to bind single- and double-stranded DNA and RNA. The chain is Zinc finger BED domain-containing protein 4 (ZBED4) from Homo sapiens (Human).